Reading from the N-terminus, the 148-residue chain is uncharacterized protein (148 aa).

The segment at 55 to 148 (KMRCGESGAG…RNQGQLYPQP (94 aa)) is disordered. The span at 68–104 (RSNSAEVSSSQPALASKSQSKWGPTSNNPRGALTTTE) shows a compositional bias: polar residues.

This is an uncharacterized protein from Homo sapiens (Human).